A 462-amino-acid polypeptide reads, in one-letter code: MVKNKNNMAIWGSRIKKDASTLFQKVGNSIDIDKKLFQEDILGSIAHVEMLFRQKIISFKIKNKIIFGLNKIEKEILKNKFEYNKKYEDIHMNIEKRLFQIIGEEAGYVHTARSRNDQVITDFKMWTTSATKEINKNLDNIIKTILKISEKNIETIMPGFTHLKNAQAVSFAHYLMSYVEMFNRDKKRFTYNLESLSENPLGVAALTGTSFNIDRNFTSKKLGFKRPTNNSIDTVADRDFVLDFLYSASVCSMHISRIAEELIIWNSDGFNLITLSDKVVTGSSIMPQKKNPDLLEYLRGKTGTVYGNLFSMLTILKGLPISYFKDLQDDKEILFKSNEILNNSIAILNEVLKNLKPNKQQMLDLANSGYITATDLADYLVKNHSMPFRKAYQTTASIVNYAEKKKKKLNELNIDELKKIEPRLTIEVLKIFNVKNSVNSKKSYGGTSFDNIKKMIMKYKKT.

Belongs to the lyase 1 family. Argininosuccinate lyase subfamily.

It is found in the cytoplasm. It catalyses the reaction 2-(N(omega)-L-arginino)succinate = fumarate + L-arginine. It functions in the pathway amino-acid biosynthesis; L-arginine biosynthesis; L-arginine from L-ornithine and carbamoyl phosphate: step 3/3. The protein is Argininosuccinate lyase of Pelagibacter ubique (strain HTCC1062).